Here is a 666-residue protein sequence, read N- to C-terminus: Protein OS-9 (666 aa).

The first 30 residues, 1-30 (MAAEALLSSLLGLLFLGLLLPAHLTGGVGS), serve as a signal peptide directing secretion. One can recognise an MRH domain in the interval 108–230 (APCLLKTKDW…SIRTSRLCPH (123 aa)). C110 and C123 are oxidised to a cystine. W117, W118, and Q130 together coordinate a mannooligosaccharide derivative. N177 is a glycosylation site (N-linked (GlcNAc...) asparagine). Disulfide bonds link C181-C216 and C196-C228. A mannooligosaccharide derivative contacts are provided by D182, R188, E212, and Y218. Disordered stretches follow at residues 261–356 (RQAE…NVQV), 370–449 (EELK…SDRE), 505–540 (ESQS…EHRV), and 631–666 (EANK…EFDF). 2 stretches are compositionally biased toward basic and acidic residues: residues 263–281 (AESK…DTDH) and 294–310 (PKKE…ESEF). A compositionally biased stretch (low complexity) spans 320–332 (QATGTEEAQAGEQ). Basic and acidic residues-rich tracts occupy residues 370–379 (EELKGAEKGK) and 395–412 (PQRE…RGLV). Residues 413–429 (EEEDGDEEEEDEDEDEQ) are compositionally biased toward acidic residues. Positions 434 to 449 (EFEKELEGMLLPSDRE) are enriched in basic and acidic residues. Over residues 631-646 (EANKERQRQSELESNY) the composition is skewed to basic and acidic residues. Acidic residues predominate over residues 657–666 (DTGDLDEFDF).

It belongs to the OS-9 family. In terms of assembly, component of the HRD1 complex, which comprises at least SYNV1/HRD1, DERL1/2, FAM8A1, HERPUD1/HERP, OS9, SEL1L and UBE2J1. FAM8A1 is stabilized by interaction with SYNV1, which prevents its proteasomal degradation. OS9 and UBE2J1 recruitment to the complex may be mediated by SEL1L. Through this complex, may interact with ERLEC1 and HSPA5. Interacts (via C-terminus) with CPNE6 (via second C2 domain); this interaction occurs in a calcium-dependent manner in vitro. Interacts with CREB3. In terms of processing, intramolecular disulfide bonds.

It localises to the endoplasmic reticulum lumen. Functionally, lectin component of the HRD1 complex, which functions in endoplasmic reticulum (ER) quality control and ER-associated degradation (ERAD). Specifically recognizes and binds improperly folded glycoproteins as well as hyperglycosylated proteins, retain them in the ER, and transfers them to the ubiquitination machinery and promote their degradation. Possible targets include TRPV4 as well as hyperglycosylated HSP90B1. This is Protein OS-9 (Os9) from Rattus norvegicus (Rat).